A 188-amino-acid chain; its full sequence is Glutathione S-transferase 2 (188 aa).

Positions 2 to 79 constitute a GST N-terminal domain; that stretch reads VHYKLMCFDV…FLARQYGYSG (78 aa). Glutathione is bound by residues Lys43, 49–51, and 63–64; these read GQL and QS. The GST C-terminal domain occupies 81 to 188; sequence TPTEEMQVDS…PHLNVFIRKL (108 aa).

This sequence belongs to the GST superfamily. Sigma family.

It catalyses the reaction RX + glutathione = an S-substituted glutathione + a halide anion + H(+). Its function is as follows. Conjugation of reduced glutathione to a wide number of exogenous and endogenous hydrophobic electrophiles. The polypeptide is Glutathione S-transferase 2 (gst-2) (Caenorhabditis elegans).